The following is a 514-amino-acid chain: 1-pyrroline-5-carboxylate dehydrogenase (514 aa).

Active-site residues include Glu-286 and Cys-320.

Belongs to the aldehyde dehydrogenase family. RocA subfamily.

It carries out the reaction L-glutamate 5-semialdehyde + NAD(+) + H2O = L-glutamate + NADH + 2 H(+). Its pathway is amino-acid degradation; L-proline degradation into L-glutamate; L-glutamate from L-proline: step 2/2. The sequence is that of 1-pyrroline-5-carboxylate dehydrogenase from Staphylococcus saprophyticus subsp. saprophyticus (strain ATCC 15305 / DSM 20229 / NCIMB 8711 / NCTC 7292 / S-41).